A 565-amino-acid chain; its full sequence is Protein unc-87 (565 aa).

A compositionally biased stretch (low complexity) spans 1–27 (MLSFNNTTSASSFQSASSRYLMSSSSS). Disordered regions lie at residues 1-83 (MLSF…TTNS) and 237-262 (IPSQ…RNTN). Over residues 54 to 69 (EALERLRPNTASRERN) the composition is skewed to basic and acidic residues. 3 Calponin-like repeats span residues 237-262 (IPSQ…RNTN), 285-310 (VRLQ…RDVC), and 338-363 (VRLQ…RRET). The span at 250 to 262 (KLMTNFGTPRNTN) shows a compositional bias: polar residues. Residues 369 to 381 (SKHPEYDHEKPDQ) show a composition bias toward basic and acidic residues. Residues 369 to 400 (SKHPEYDHEKPDQSEIPLQSGTNKFASQKGMT) are disordered. The segment covering 384–398 (IPLQSGTNKFASQKG) has biased composition (polar residues). 4 Calponin-like repeats span residues 384 to 409 (IPLQ…RRET), 431 to 456 (IPSQ…RWEV), 472 to 497 (VRLQ…RNTT), and 517 to 542 (IPSQ…RDVK).

Belongs to the calponin family. Monomer. Interacts with F-actin. Interacts with myosin. Expressed in the body wall muscles. Isoform a: Expression in the pharynx, anal depressor muscle, uterine muscle, vulva and unidentified neurons in the head and the ventral region. Isoform b: Expression in the body wall muscles, spermatheca, vulva and in the myoepithelial sheath.

Its subcellular location is the cytoplasm. The protein localises to the myofibril. It localises to the sarcomere. The protein resides in the i band. Its function is as follows. Thin filament-associated protein that is implicated in actin bundling and actin filament dynamics. Exhibits F-actin cross-linking activity. Required for the maintenance of sarcomeric actin organization in striated muscles. Competes with unc-60 isoform b for actin binding and protects actin filaments from depolymerization by unc-60, thereby contributing to actin filament stability. Cooperates with myosin to form actomyosin bundles and inhibits actomyosin ATPase activity and actomyosin motility. Might protect the myofilaments from mechanical stress. Functionally, acts as a negative regulator of myosin-dependent contractility of smooth muscle-like cells in the somatic gonad. This is Protein unc-87 (unc-87) from Caenorhabditis elegans.